Reading from the N-terminus, the 380-residue chain is Pectin lyase (380 aa).

An N-terminal signal peptide occupies residues 1–20; the sequence is MRSASILSAALAAFAPLASA. Asn-130 is a glycosylation site (N-linked (GlcNAc...) asparagine).

It belongs to the polysaccharide lyase 1 family.

Its subcellular location is the secreted. It carries out the reaction Eliminative cleavage of (1-&gt;4)-alpha-D-galacturonan methyl ester to give oligosaccharides with 4-deoxy-6-O-methyl-alpha-D-galact-4-enuronosyl groups at their non-reducing ends.. In Colletotrichum gloeosporioides (Anthracnose fungus), this protein is Pectin lyase (PNLA).